The sequence spans 157 residues: MRCPFCGHAESQVKDSRPSEDGAAIRRRRMCPECGGRFTTFERVQLRELIIVKRSGRRSPFDRDKLVRSVGLATQKRPVDPERVERMVNGIVRQLESMGETELPSSTVGEMVMKALKSLDDVAYVRYASVYRDFKETSDFAKFLTEEGLSDGGEEEL.

A zinc finger spans residues 3 to 34 (CPFCGHAESQVKDSRPSEDGAAIRRRRMCPEC). The ATP-cone domain occupies 49–139 (LIIVKRSGRR…VYRDFKETSD (91 aa)).

Belongs to the NrdR family. Zn(2+) is required as a cofactor.

Its function is as follows. Negatively regulates transcription of bacterial ribonucleotide reductase nrd genes and operons by binding to NrdR-boxes. The sequence is that of Transcriptional repressor NrdR from Caulobacter vibrioides (strain ATCC 19089 / CIP 103742 / CB 15) (Caulobacter crescentus).